Reading from the N-terminus, the 233-residue chain is Small ribosomal subunit protein uS2 (233 aa).

Belongs to the universal ribosomal protein uS2 family.

In Bacillus mycoides (strain KBAB4) (Bacillus weihenstephanensis), this protein is Small ribosomal subunit protein uS2.